Consider the following 253-residue polypeptide: MRILLTNDDGINAPGLSVLEEIAKEISDDIWIAAPEEEQSGKGRAISLTHPVRVRKVGAKAWAVSGTPSDAVLLATRDLMPDMPDLVLSGVNRGQNIAEDTSFSGTIAAAMFGMQLGVPSIALSQAQNFRERGSLSWETSKAWGAKAIRPLLEMRWPKDVVMNVNFPDVEPGDVRGIQITRQGFRDEAIIHTDRREDLRGNDYYWIGYRGKLSKPDEGTDIRAIYDGYVSISPLHVDLTHEPFLKTLKESWQS.

Residues D8, D9, S40, and N92 each coordinate a divalent metal cation.

It belongs to the SurE nucleotidase family. Requires a divalent metal cation as cofactor.

It is found in the cytoplasm. The enzyme catalyses a ribonucleoside 5'-phosphate + H2O = a ribonucleoside + phosphate. Functionally, nucleotidase that shows phosphatase activity on nucleoside 5'-monophosphates. This chain is 5'-nucleotidase SurE, found in Hyphomonas neptunium (strain ATCC 15444).